The following is a 562-amino-acid chain: Putative transport protein ECA2683 (562 aa).

6 consecutive transmembrane segments (helical) span residues L8 to G28, L32 to Q52, F66 to F86, F93 to L113, W116 to V136, and H158 to A178. RCK C-terminal domains are found at residues L202–D288 and K290–F373. 5 helical membrane-spanning segments follow: residues L383 to F403, F406 to L426, F447 to S467, S478 to L498, and G537 to W557.

It belongs to the AAE transporter (TC 2.A.81) family. YbjL subfamily.

It localises to the cell membrane. This Pectobacterium atrosepticum (strain SCRI 1043 / ATCC BAA-672) (Erwinia carotovora subsp. atroseptica) protein is Putative transport protein ECA2683.